The following is a 287-amino-acid chain: Acetylglutamate kinase (287 aa).

Residues 65-66 (GG), Arg87, and Asn181 contribute to the substrate site.

The protein belongs to the acetylglutamate kinase family. ArgB subfamily.

The protein resides in the cytoplasm. The catalysed reaction is N-acetyl-L-glutamate + ATP = N-acetyl-L-glutamyl 5-phosphate + ADP. It participates in amino-acid biosynthesis; L-arginine biosynthesis; N(2)-acetyl-L-ornithine from L-glutamate: step 2/4. Its function is as follows. Catalyzes the ATP-dependent phosphorylation of N-acetyl-L-glutamate. The chain is Acetylglutamate kinase from Syntrophomonas wolfei subsp. wolfei (strain DSM 2245B / Goettingen).